Here is a 385-residue protein sequence, read N- to C-terminus: Sensor histidine kinase Hik2 (385 aa).

A GAF domain is found at 11-131 (ALCRTQLELV…QQVAQTLAIA (121 aa)). Residue Cys-13 participates in [3Fe-4S] cluster binding. Residues 142–270 (SHSPAQPLDQ…PQLPPIWLEE (129 aa)) are DHp domain, may sense NaCl. The Histidine kinase domain maps to 158–381 (DLLHQLRNPV…AFTLAIPWQM (224 aa)). Residue His-161 is modified to Phosphohistidine; by autocatalysis.

This sequence belongs to the chloroplast sensor kinase protein family. Hexamers; upon treatment with 0.5 M NaCl only tetramers are seen. The tetramers are probably inactive. [3Fe-4S] cluster is required as a cofactor. Post-translationally, autophosphorylates, possibly on His-161.

The enzyme catalyses ATP + protein L-histidine = ADP + protein N-phospho-L-histidine.. In terms of biological role, member of 2 two-component regulatory system(s) Hik2/Rre1 and Hik2/RppA. Transduces PQ (plastoquinone) redox signals to photosystem gene expression machinery during the adjustment of photosystem stoichiometry. Reduced PQ suppresses its autophosphorylation activity (i.e. kinase activity is higher under oxidizing conditions). As part of a two-component regulatory system with Rre1, controls expression of sigB and several other genes in response to hyperosmotic stress. May transfer phosphate to RppA in a possible Hik2/RppA two-component system. This is Sensor histidine kinase Hik2 from Thermosynechococcus vestitus (strain NIES-2133 / IAM M-273 / BP-1).